Consider the following 1032-residue polypeptide: Protein transport protein Sec24D (1032 aa).

A disordered region spans residues methionine 1 to aspartate 260. Over residues proline 102–glycine 133 the composition is skewed to polar residues. Residues glycine 198–proline 212 are compositionally biased toward pro residues. A Phosphoserine modification is found at serine 266. The Zn(2+) site is built by cysteine 363, cysteine 366, cysteine 385, and cysteine 388. Residues cysteine 363–cysteine 388 form a zinc finger-like region. The Gelsolin-like repeat unit spans residues methionine 901 to methionine 974.

It belongs to the SEC23/SEC24 family. SEC24 subfamily. In terms of assembly, COPII is composed of at least five proteins: the Sec23/24 complex, the Sec13/31 complex and Sar1. Interacts with TMED2 and TMED10. Interacts with CNIH4. Interacts with GOSR2 (via IxM motif) and STX5 (via IxM motif); recruits GOSR2 and STX5 into COPII-coated vesicles. Interacts with KCNA3; this interaction is reduced in the presence of KCNE4. Ubiquitously expressed, with higher amounts in placenta, pancreas, heart and liver.

The protein localises to the cytoplasmic vesicle. Its subcellular location is the COPII-coated vesicle membrane. The protein resides in the endoplasmic reticulum membrane. It localises to the cytoplasm. It is found in the cytosol. Functionally, component of the coat protein complex II (COPII) which promotes the formation of transport vesicles from the endoplasmic reticulum (ER). The coat has two main functions, the physical deformation of the endoplasmic reticulum membrane into vesicles and the selection of cargo molecules for their transport to the Golgi complex. Plays a central role in cargo selection within the COPII complex and together with SEC24C may have a different specificity compared to SEC24A and SEC24B. May more specifically package GPI-anchored proteins through the cargo receptor TMED10. May also be specific for IxM motif-containing cargos like the SNAREs GOSR2 and STX5. The sequence is that of Protein transport protein Sec24D from Homo sapiens (Human).